We begin with the raw amino-acid sequence, 207 residues long: Macrophage immunometabolism regulator (207 aa).

Residue Met1 is modified to N-acetylmethionine. Residues 1–41 (MEVDINGDSRSTLTTLPLPVAEGSSPGKAEAEKPRCSSTPC) form a disordered region. Phosphoserine occurs at positions 25 and 167.

The protein belongs to the UNC119-binding protein family. As to quaternary structure, interacts with UNC119 and UNC119B; interaction preferentially takes place when UNC119 and UNC119B are unliganded with myristoylated proteins. Highly expressed in photoreceptors.

The protein resides in the cytoplasm. It localises to the cell projection. The protein localises to the cilium. Regulates the macrophage function, by enhancing the resolution of inflammation and wound repair functions mediated by M2 macrophages. The regulation of macrophage function is, due at least in part, to its ability to inhibit glycolysis. May also play a role in trafficking of proteins via its interaction with UNC119 and UNC119B cargo adapters: may help the release of UNC119 and UNC119B cargo or the recycling of UNC119 and UNC119B. May play a role in ciliary membrane localization via its interaction with UNC119B and protein transport into photoreceptor cells. The chain is Macrophage immunometabolism regulator from Mus musculus (Mouse).